The sequence spans 227 residues: Phosphoribosylformylglycinamidine synthase subunit PurQ (227 aa).

A Glutamine amidotransferase type-1 domain is found at 3-225; the sequence is FAVIVFPGSN…LKQWRETYVV (223 aa). Cys86 serves as the catalytic Nucleophile. Catalysis depends on residues His194 and Glu196.

Part of the FGAM synthase complex composed of 1 PurL, 1 PurQ and 2 PurS subunits.

Its subcellular location is the cytoplasm. It carries out the reaction N(2)-formyl-N(1)-(5-phospho-beta-D-ribosyl)glycinamide + L-glutamine + ATP + H2O = 2-formamido-N(1)-(5-O-phospho-beta-D-ribosyl)acetamidine + L-glutamate + ADP + phosphate + H(+). The catalysed reaction is L-glutamine + H2O = L-glutamate + NH4(+). Its pathway is purine metabolism; IMP biosynthesis via de novo pathway; 5-amino-1-(5-phospho-D-ribosyl)imidazole from N(2)-formyl-N(1)-(5-phospho-D-ribosyl)glycinamide: step 1/2. Functionally, part of the phosphoribosylformylglycinamidine synthase complex involved in the purines biosynthetic pathway. Catalyzes the ATP-dependent conversion of formylglycinamide ribonucleotide (FGAR) and glutamine to yield formylglycinamidine ribonucleotide (FGAM) and glutamate. The FGAM synthase complex is composed of three subunits. PurQ produces an ammonia molecule by converting glutamine to glutamate. PurL transfers the ammonia molecule to FGAR to form FGAM in an ATP-dependent manner. PurS interacts with PurQ and PurL and is thought to assist in the transfer of the ammonia molecule from PurQ to PurL. The polypeptide is Phosphoribosylformylglycinamidine synthase subunit PurQ (Bacillus anthracis (strain A0248)).